Consider the following 104-residue polypeptide: Large ribosomal subunit protein uL24 (104 aa).

Belongs to the universal ribosomal protein uL24 family. Part of the 50S ribosomal subunit.

Functionally, one of two assembly initiator proteins, it binds directly to the 5'-end of the 23S rRNA, where it nucleates assembly of the 50S subunit. One of the proteins that surrounds the polypeptide exit tunnel on the outside of the subunit. The chain is Large ribosomal subunit protein uL24 from Nitrobacter winogradskyi (strain ATCC 25391 / DSM 10237 / CIP 104748 / NCIMB 11846 / Nb-255).